The following is a 438-amino-acid chain: Gamma-glutamyl phosphate reductase (438 aa).

The protein belongs to the gamma-glutamyl phosphate reductase family.

The protein resides in the cytoplasm. The enzyme catalyses L-glutamate 5-semialdehyde + phosphate + NADP(+) = L-glutamyl 5-phosphate + NADPH + H(+). Its pathway is amino-acid biosynthesis; L-proline biosynthesis; L-glutamate 5-semialdehyde from L-glutamate: step 2/2. Functionally, catalyzes the NADPH-dependent reduction of L-glutamate 5-phosphate into L-glutamate 5-semialdehyde and phosphate. The product spontaneously undergoes cyclization to form 1-pyrroline-5-carboxylate. The protein is Gamma-glutamyl phosphate reductase of Natronomonas pharaonis (strain ATCC 35678 / DSM 2160 / CIP 103997 / JCM 8858 / NBRC 14720 / NCIMB 2260 / Gabara) (Halobacterium pharaonis).